Consider the following 243-residue polypeptide: Carboxy-S-adenosyl-L-methionine synthase (243 aa).

S-adenosyl-L-methionine-binding positions include Tyr40, 65–67 (GCS), 90–91 (DN), 118–119 (DI), Asn133, and Arg200.

The protein belongs to the class I-like SAM-binding methyltransferase superfamily. Cx-SAM synthase family. Homodimer.

The catalysed reaction is prephenate + S-adenosyl-L-methionine = carboxy-S-adenosyl-L-methionine + 3-phenylpyruvate + H2O. Its function is as follows. Catalyzes the conversion of S-adenosyl-L-methionine (SAM) to carboxy-S-adenosyl-L-methionine (Cx-SAM). The polypeptide is Carboxy-S-adenosyl-L-methionine synthase (Shewanella loihica (strain ATCC BAA-1088 / PV-4)).